A 241-amino-acid chain; its full sequence is DnaA regulatory inactivator Hda (241 aa).

It belongs to the DnaA family. HdA subfamily. In terms of assembly, the active form seems to be an ADP-bound monomer. Forms the RIDA complex (regulatory inactivation of DnaA) of ATP-DnaA, ADP-Hda and the DNA-loaded beta sliding clamp (dnaN).

Functionally, mediates the interaction of DNA replication initiator protein DnaA with DNA polymerase subunit beta sliding clamp (dnaN). Stimulates hydrolysis of ATP-DnaA to ADP-DnaA, rendering DnaA inactive for reinitiation, a process called regulatory inhibition of DnaA or RIDA. In Salmonella agona (strain SL483), this protein is DnaA regulatory inactivator Hda.